The primary structure comprises 495 residues: Acetyl-coenzyme A carboxylase carboxyl transferase subunit beta, chloroplastic (495 aa).

The disordered stretch occupies residues E187 to L208. Residues L226–K495 form the CoA carboxyltransferase N-terminal domain. Zn(2+) contacts are provided by C230, C233, C249, and C252. A C4-type zinc finger spans residues C230–C252.

This sequence belongs to the AccD/PCCB family. In terms of assembly, acetyl-CoA carboxylase is a heterohexamer composed of biotin carboxyl carrier protein, biotin carboxylase and 2 subunits each of ACCase subunit alpha and ACCase plastid-coded subunit beta (accD). Requires Zn(2+) as cofactor. In terms of tissue distribution, RNA expressed in leaf, root and stem; the least expression occurs in stems.

Its subcellular location is the plastid. It is found in the chloroplast stroma. It carries out the reaction N(6)-carboxybiotinyl-L-lysyl-[protein] + acetyl-CoA = N(6)-biotinyl-L-lysyl-[protein] + malonyl-CoA. Its pathway is lipid metabolism; malonyl-CoA biosynthesis; malonyl-CoA from acetyl-CoA: step 1/1. Functionally, component of the acetyl coenzyme A carboxylase (ACC) complex. Biotin carboxylase (BC) catalyzes the carboxylation of biotin on its carrier protein (BCCP) and then the CO(2) group is transferred by the transcarboxylase to acetyl-CoA to form malonyl-CoA. The protein is Acetyl-coenzyme A carboxylase carboxyl transferase subunit beta, chloroplastic of Nicotiana tabacum (Common tobacco).